Reading from the N-terminus, the 812-residue chain is MNNGDVNNGTARTGRLATGLAPDRPNPRGAATAVRNGGGRVALADRDASSASAQPGQTADDPAVPSAPPSAPPSALPADPPAVAPAVSVDLPYDDLERLVSGAHHDPHALLGAHPHPGSDATVVRVLRPDARAVTVLVGPARYPATRLHSGGVFGVAVPGMLPDYRIEVTYPDGPYLIDDPYRHLPTLGEMDLHLIIEGRHEQLWKVLGAHPRALTTPGGATVTGVSFAVWAPSARGVRLVGDFDFWDGRAFPMRSLGRSGIWELFVPGAGTGARYKYEILGFDGIWRQKADPLAFHTEVPPATASVVFASDFTWNDGAWLDRRARTAWRTEPVSVYEVHLGSWRRGLSYRELAEELTAYVVENGFTHVEMLPVAEHPFGGSWGYQVSAYYAPTARFGSPDEFRHLVDTLHRAGIGVIVDWVPAHFPRDTWALGRFDGTPLYEHPDPRRGEQPDWGTYVFDLGRPEVRNFLVANALYWFEEFHIDGLRVDAVASMLYLDYSRPEGGWLPNIHGGRENLDAVSFLQETNATVYRRFPGAMMIAEESTAWPGVTRPTHLGGLGFGFKWNMGWMHDTLDYNSRLPIHRMYHHHQMTFSMVYAYSENFILPFSHDEVVHGKGSLLRKMPGDRWAQLANLRALLAYMWAHPGKKLLFMGCEFAQDNEWNESASLEWPLLDDPAHAGVADLVRDLNGLYRTVPALYQHDADPAGFSWIDANDAENNVFSFLRWSGEDPAGGVLACVTNFAGIGHEGYRIGLPFPGRWREILNTDGYRYGGGNIGNLGSVQAVEEPHHGLDASATLTLPPLGAIWLSPA.

Over residues 1 to 11 (MNNGDVNNGTA) the composition is skewed to polar residues. Residues 1–83 (MNNGDVNNGT…SALPADPPAV (83 aa)) are disordered. Low complexity predominate over residues 49-64 (SSASAQPGQTADDPAV). Pro residues predominate over residues 65–83 (PSAPPSAPPSALPADPPAV). The active-site Nucleophile is the Asp490. Glu543 serves as the catalytic Proton donor.

Belongs to the glycosyl hydrolase 13 family. GlgB subfamily. Monomer.

The catalysed reaction is Transfers a segment of a (1-&gt;4)-alpha-D-glucan chain to a primary hydroxy group in a similar glucan chain.. It functions in the pathway glycan biosynthesis; glycogen biosynthesis. Functionally, catalyzes the formation of the alpha-1,6-glucosidic linkages in glycogen by scission of a 1,4-alpha-linked oligosaccharide from growing alpha-1,4-glucan chains and the subsequent attachment of the oligosaccharide to the alpha-1,6 position. This chain is 1,4-alpha-glucan branching enzyme GlgB, found in Frankia casuarinae (strain DSM 45818 / CECT 9043 / HFP020203 / CcI3).